The following is a 50-amino-acid chain: Defensin D4 (50 aa).

4 cysteine pairs are disulfide-bonded: Cys3/Cys50, Cys14/Cys35, Cys20/Cys44, and Cys24/Cys46.

As to expression, detected in seeds (at protein level).

Its subcellular location is the secreted. Functionally, antimicrobial peptide with antifungal activity. This chain is Defensin D4, found in Nigella sativa (Black cumin).